Here is a 645-residue protein sequence, read N- to C-terminus: Cell pattern formation-associated protein stuA (645 aa).

Residues 1–52 (MNQMQPYADVHQPHMSTAAHAPASGPPAGLSHYSYPHQPSMMQPQQQQHQYG) are disordered. Residues 18 to 52 (AAHAPASGPPAGLSHYSYPHQPSMMQPQQQQHQYG) show a composition bias toward low complexity. In terms of domain architecture, HTH APSES-type spans 124 to 230 (RVTATLWEDE…HDIGALLYHP (107 aa)). A DNA-binding region (H-T-H motif) is located at residues 158 to 179 (GTKLLNVAGMTRGRRDGILKSE). Positions 246–645 (VDRNRRPDSM…HTLAAQRARR (400 aa)) are disordered. Composition is skewed to polar residues over residues 254–271 (SMQTQQRYMAGPTTSQAP) and 279–288 (MTNSVGSAMS). Low complexity predominate over residues 317–330 (SASSMMGMGNQGSS). Over residues 336-365 (ANVQQHPQGNQPLSIDTGLSNARSVPTTPA) the composition is skewed to polar residues. A compositionally biased stretch (low complexity) spans 469–481 (PYNGNRGPYGYNP). Composition is skewed to polar residues over residues 502–542 (SPHQ…NLYN) and 569–584 (YASQGYAPTNGVNSSG). The segment at 585-613 (KRGRDEEDAETYRPDSVQGDDMGGLKRRK) is nuclear localization domain. The span at 586–597 (RGRDEEDAETYR) shows a compositional bias: basic and acidic residues.

Belongs to the EFG1/PHD1/stuA family.

The protein resides in the nucleus. Transcription factor that regulates asexual reproduction. Binds the StuA-response elements (StRE) with the consensus sequence 5'-(A/T)CGCG(T/A)N(A/C)-3' at the promoters of target genes. Regulates the expression of several effector genes (AvrLm1, AvrLm6 and AvrLm4-7) during infection stage. The chain is Cell pattern formation-associated protein stuA from Leptosphaeria maculans (strain JN3 / isolate v23.1.3 / race Av1-4-5-6-7-8) (Blackleg fungus).